A 338-amino-acid polypeptide reads, in one-letter code: Phenylalanine--tRNA ligase alpha subunit (338 aa).

Residue Glu252 coordinates Mg(2+).

It belongs to the class-II aminoacyl-tRNA synthetase family. Phe-tRNA synthetase alpha subunit type 1 subfamily. Tetramer of two alpha and two beta subunits. Requires Mg(2+) as cofactor.

The protein localises to the cytoplasm. The enzyme catalyses tRNA(Phe) + L-phenylalanine + ATP = L-phenylalanyl-tRNA(Phe) + AMP + diphosphate + H(+). The protein is Phenylalanine--tRNA ligase alpha subunit of Pseudomonas fluorescens (strain Pf0-1).